Consider the following 84-residue polypeptide: Exodeoxyribonuclease 7 small subunit (84 aa).

This sequence belongs to the XseB family. In terms of assembly, heterooligomer composed of large and small subunits.

The protein resides in the cytoplasm. The enzyme catalyses Exonucleolytic cleavage in either 5'- to 3'- or 3'- to 5'-direction to yield nucleoside 5'-phosphates.. Its function is as follows. Bidirectionally degrades single-stranded DNA into large acid-insoluble oligonucleotides, which are then degraded further into small acid-soluble oligonucleotides. The polypeptide is Exodeoxyribonuclease 7 small subunit (Bartonella bacilliformis (strain ATCC 35685 / KC583 / Herrer 020/F12,63)).